A 339-amino-acid polypeptide reads, in one-letter code: 5-dehydro-2-deoxygluconokinase (339 aa).

This sequence belongs to the carbohydrate kinase PfkB family.

The enzyme catalyses 5-dehydro-2-deoxy-D-gluconate + ATP = 6-phospho-5-dehydro-2-deoxy-D-gluconate + ADP + H(+). It participates in polyol metabolism; myo-inositol degradation into acetyl-CoA; acetyl-CoA from myo-inositol: step 5/7. Its function is as follows. Catalyzes the phosphorylation of 5-dehydro-2-deoxy-D-gluconate (2-deoxy-5-keto-D-gluconate or DKG) to 6-phospho-5-dehydro-2-deoxy-D-gluconate (DKGP). The polypeptide is 5-dehydro-2-deoxygluconokinase (Clostridium botulinum (strain Alaska E43 / Type E3)).